A 127-amino-acid polypeptide reads, in one-letter code: MRDIQMVLERWGAWAANNHEDVTWSSIAAGFKGLITSKVKSRPQCCDDDAMIICGCMARLKKNNSDLHDLLVDYYVVGMTFMSLAGKHCCSDGYIGKRLQKAEGIIEGMLMALDIRLEMDIVVNNSN.

Belongs to the phage antitermination Q type 1 family.

Positively regulate expression of some phage genes. Bacterial host RNA polymerase modified by antitermination proteins transcribes through termination sites that otherwise prevent expression of the regulated genes. The polypeptide is Prophage antitermination protein Q homolog QuuD (quuD) (Escherichia coli (strain K12)).